Here is a 296-residue protein sequence, read N- to C-terminus: Cytidine deaminase (296 aa).

2 consecutive CMP/dCMP-type deaminase domains span residues 47-167 and 186-296; these read TEAE…FGPK and DSSD…VDPV. Residue 88–90 participates in substrate binding; that stretch reads NLE. Position 101 (His-101) interacts with Zn(2+). Glu-103 functions as the Proton donor in the catalytic mechanism. Zn(2+) contacts are provided by Cys-128 and Cys-131.

This sequence belongs to the cytidine and deoxycytidylate deaminase family. In terms of assembly, homodimer. It depends on Zn(2+) as a cofactor.

It carries out the reaction cytidine + H2O + H(+) = uridine + NH4(+). It catalyses the reaction 2'-deoxycytidine + H2O + H(+) = 2'-deoxyuridine + NH4(+). Functionally, this enzyme scavenges exogenous and endogenous cytidine and 2'-deoxycytidine for UMP synthesis. This chain is Cytidine deaminase, found in Shewanella sp. (strain MR-4).